A 207-amino-acid polypeptide reads, in one-letter code: ATP synthase subunit delta (207 aa).

Belongs to the ATPase delta chain family. As to quaternary structure, F-type ATPases have 2 components, F(1) - the catalytic core - and F(0) - the membrane proton channel. F(1) has five subunits: alpha(3), beta(3), gamma(1), delta(1), epsilon(1). F(0) has three main subunits: a(1), b(2) and c(10-14). The alpha and beta chains form an alternating ring which encloses part of the gamma chain. F(1) is attached to F(0) by a central stalk formed by the gamma and epsilon chains, while a peripheral stalk is formed by the delta and b chains.

Its subcellular location is the cell inner membrane. Functionally, f(1)F(0) ATP synthase produces ATP from ADP in the presence of a proton or sodium gradient. F-type ATPases consist of two structural domains, F(1) containing the extramembraneous catalytic core and F(0) containing the membrane proton channel, linked together by a central stalk and a peripheral stalk. During catalysis, ATP synthesis in the catalytic domain of F(1) is coupled via a rotary mechanism of the central stalk subunits to proton translocation. This protein is part of the stalk that links CF(0) to CF(1). It either transmits conformational changes from CF(0) to CF(1) or is implicated in proton conduction. This is ATP synthase subunit delta from Psychrobacter cryohalolentis (strain ATCC BAA-1226 / DSM 17306 / VKM B-2378 / K5).